The chain runs to 1029 residues: Kinesin-like protein KIF17 (1029 aa).

Positions 5–335 constitute a Kinesin motor domain; the sequence is AVKVVVRCRP…LRYANRAKNI (331 aa). Residue 91-98 coordinates ATP; it reads GQTGSGKS. Positions 346–462 form a coiled coil; it reads KDALLREYQE…EENLRKETEA (117 aa). Disordered stretches follow at residues 523–569 and 647–673; these read ELPK…MPTE and VPAP…PPRP. Low complexity predominate over residues 532–551; sequence SEISLGSSESSSLEETSVSE. Over residues 657–673 the composition is skewed to basic and acidic residues; the sequence is SDARPEAEAADDFPPRP. Residues 739-846 are a coiled coil; it reads QQVLARLQLL…QLEKIDYLAT (108 aa). 2 disordered regions span residues 908 to 931 and 968 to 1029; these read AVST…EPNM and KSLT…SEPL.

The protein belongs to the TRAFAC class myosin-kinesin ATPase superfamily. Kinesin family. As to quaternary structure, homodimer. Interacts with APBA1 (via PDZ domain); the interaction is direct and is required for association of KIF17 with the cargo that is to be transported. Interacts with IFT B complex components IFT52 and IFT57. Interacts with IFT70B. Interacts with PIWIL1. Interacts with TBATA.

The protein resides in the cytoplasm. It is found in the cytoskeleton. The protein localises to the cell projection. It localises to the cilium. Its subcellular location is the dendrite. Dendrite-specific motor protein which, in association with the Apba1-containing complex (LIN-10-LIN-2-LIN-7 complex), transports vesicles containing N-methyl-D-aspartate (NMDA) receptor subunit NR2B along microtubules. The chain is Kinesin-like protein KIF17 (KIF17) from Homo sapiens (Human).